Here is a 117-residue protein sequence, read N- to C-terminus: MTRVKRGKITCRTRKKRMQSVKGFRGAWSTLSRPAMQGSLRALNYSYKHRRKNVKTFRRLSIVRFNALIRNSGLPFTYNRLIALINLYNCRLNRNVLSQLGIRDSNTFTKLMKFYYH.

The protein belongs to the bacterial ribosomal protein bL20 family.

It is found in the plastid. It localises to the chloroplast. Functionally, binds directly to 23S ribosomal RNA and is necessary for the in vitro assembly process of the 50S ribosomal subunit. It is not involved in the protein synthesizing functions of that subunit. The protein is Large ribosomal subunit protein bL20c (rpl20) of Bigelowiella natans (Pedinomonas minutissima).